The following is a 159-amino-acid chain: NADH-quinone oxidoreductase subunit I (159 aa).

2 consecutive 4Fe-4S ferredoxin-type domains span residues 51–80 and 90–119; these read RRYE…IEAE and TRYD…EGPN. 8 residues coordinate [4Fe-4S] cluster: Cys60, Cys63, Cys66, Cys70, Cys99, Cys102, Cys105, and Cys109.

This sequence belongs to the complex I 23 kDa subunit family. As to quaternary structure, NDH-1 is composed of 14 different subunits. Subunits NuoA, H, J, K, L, M, N constitute the membrane sector of the complex. [4Fe-4S] cluster serves as cofactor.

Its subcellular location is the cell inner membrane. The enzyme catalyses a quinone + NADH + 5 H(+)(in) = a quinol + NAD(+) + 4 H(+)(out). NDH-1 shuttles electrons from NADH, via FMN and iron-sulfur (Fe-S) centers, to quinones in the respiratory chain. The immediate electron acceptor for the enzyme in this species is believed to be ubiquinone. Couples the redox reaction to proton translocation (for every two electrons transferred, four hydrogen ions are translocated across the cytoplasmic membrane), and thus conserves the redox energy in a proton gradient. This Rickettsia canadensis (strain McKiel) protein is NADH-quinone oxidoreductase subunit I.